We begin with the raw amino-acid sequence, 225 residues long: 3-dehydroquinate dehydratase (225 aa).

3-dehydroquinate-binding positions include 30–32 and arginine 62; that span reads EWR. The active-site Proton donor/acceptor is histidine 118. Residue lysine 143 is the Schiff-base intermediate with substrate of the active site. Arginine 186, serine 205, and glutamine 209 together coordinate 3-dehydroquinate.

Belongs to the type-I 3-dehydroquinase family. In terms of assembly, homodimer.

It carries out the reaction 3-dehydroquinate = 3-dehydroshikimate + H2O. Its pathway is metabolic intermediate biosynthesis; chorismate biosynthesis; chorismate from D-erythrose 4-phosphate and phosphoenolpyruvate: step 3/7. In terms of biological role, involved in the third step of the chorismate pathway, which leads to the biosynthesis of aromatic amino acids. Catalyzes the cis-dehydration of 3-dehydroquinate (DHQ) and introduces the first double bond of the aromatic ring to yield 3-dehydroshikimate. This chain is 3-dehydroquinate dehydratase, found in Streptococcus mutans serotype c (strain ATCC 700610 / UA159).